Here is a 262-residue protein sequence, read N- to C-terminus: Nodulation protein J (262 aa).

The ABC transmembrane type-2 domain maps to 33-259 (ASLLGHLAEP…FLSTALLRRR (227 aa)). Transmembrane regions (helical) follow at residues 35–55 (LLGHLAEPLIYLFGLGAGLGV), 60–80 (VGGVSYTAFLAAGMVATSAMT), 125–145 (AALAGAGIGVVAAALGYTQWL), 148–168 (LYALPVIALTGLAFASLGMVV), 177–197 (YFIFYQTLVITPILFLSGAVF), and 231–251 (VVDVCQHVGALCIYIVIPFFL).

It belongs to the ABC-2 integral membrane protein family. Lipooligosaccharide exporter (TC 3.A.1.102) subfamily. In terms of assembly, the complex is composed of two ATP-binding proteins (NodI) and two transmembrane proteins (NodJ).

It localises to the cell inner membrane. Its function is as follows. Part of the ABC transporter complex NodIJ involved in the export of the nodulation factors (Nod factors), the bacterial signal molecules that induce symbiosis and subsequent nodulation induction. Nod factors are LCO (lipo-chitin oligosaccharide), a modified beta-1,4-linked N-acetylglucosamine oligosaccharide. This subunit encodes the transporter. This Rhizobium leguminosarum bv. trifolii protein is Nodulation protein J (nodJ).